The primary structure comprises 192 residues: Epoxyqueuosine reductase QueH (192 aa).

Cysteine 9, cysteine 10, cysteine 87, and cysteine 90 together coordinate [4Fe-4S] cluster. A disulfide bridge connects residues cysteine 169 and cysteine 171.

The protein belongs to the QueH family.

The catalysed reaction is epoxyqueuosine(34) in tRNA + AH2 = queuosine(34) in tRNA + A + H2O. The protein operates within tRNA modification; tRNA-queuosine biosynthesis. Catalyzes the conversion of epoxyqueuosine (oQ) to queuosine (Q), which is a hypermodified base found in the wobble positions of tRNA(Asp), tRNA(Asn), tRNA(His) and tRNA(Tyr). In Thermotoga maritima (strain ATCC 43589 / DSM 3109 / JCM 10099 / NBRC 100826 / MSB8), this protein is Epoxyqueuosine reductase QueH.